Consider the following 199-residue polypeptide: Small ribosomal subunit protein eS1 (199 aa).

This sequence belongs to the eukaryotic ribosomal protein eS1 family.

This chain is Small ribosomal subunit protein eS1, found in Pyrococcus horikoshii (strain ATCC 700860 / DSM 12428 / JCM 9974 / NBRC 100139 / OT-3).